A 246-amino-acid polypeptide reads, in one-letter code: Eukaryotic translation initiation factor 6 (246 aa).

The protein belongs to the eIF-6 family. In terms of assembly, monomer. Associates with the 60S ribosomal subunit.

It localises to the cytoplasm. Its subcellular location is the nucleus. The protein resides in the nucleolus. Functionally, binds to the 60S ribosomal subunit and prevents its association with the 40S ribosomal subunit to form the 80S initiation complex in the cytoplasm. May also be involved in ribosome biogenesis. Involved in miRNA-mediated gene silencing. This Caenorhabditis elegans protein is Eukaryotic translation initiation factor 6.